The sequence spans 86 residues: Cytochrome c-555 (86 aa).

The heme c site is built by Cys-14, Cys-17, His-18, and Met-60.

Post-translationally, binds 1 heme c group covalently per subunit.

This basic c-type monoheme cytochrome has been found exclusively in the green photosynthetic bacteria, although its role in bacterial photosynthesis is not established. It has an unusually low redox potential compared with mitochondrial cytochrome c. It is reactive with cytochrome c oxidases but not with reductases. This is Cytochrome c-555 from Chlorobaculum thiosulfatiphilum (Chlorobium limicola f.sp. thiosulfatophilum).